We begin with the raw amino-acid sequence, 577 residues long: Proline--tRNA ligase (577 aa).

This sequence belongs to the class-II aminoacyl-tRNA synthetase family. ProS type 1 subfamily. Homodimer.

The protein localises to the cytoplasm. The catalysed reaction is tRNA(Pro) + L-proline + ATP = L-prolyl-tRNA(Pro) + AMP + diphosphate. Functionally, catalyzes the attachment of proline to tRNA(Pro) in a two-step reaction: proline is first activated by ATP to form Pro-AMP and then transferred to the acceptor end of tRNA(Pro). As ProRS can inadvertently accommodate and process non-cognate amino acids such as alanine and cysteine, to avoid such errors it has two additional distinct editing activities against alanine. One activity is designated as 'pretransfer' editing and involves the tRNA(Pro)-independent hydrolysis of activated Ala-AMP. The other activity is designated 'posttransfer' editing and involves deacylation of mischarged Ala-tRNA(Pro). The misacylated Cys-tRNA(Pro) is not edited by ProRS. This chain is Proline--tRNA ligase, found in Janthinobacterium sp. (strain Marseille) (Minibacterium massiliensis).